Reading from the N-terminus, the 168-residue chain is Cyanate hydratase (168 aa).

Catalysis depends on residues Arg-91, Glu-94, and Ser-117.

It belongs to the cyanase family.

It catalyses the reaction cyanate + hydrogencarbonate + 3 H(+) = NH4(+) + 2 CO2. Catalyzes the reaction of cyanate with bicarbonate to produce ammonia and carbon dioxide. The chain is Cyanate hydratase from Arabidopsis thaliana (Mouse-ear cress).